The primary structure comprises 495 residues: MRINPTTSDSTVSTLEEKNLGRIAQIIGPVLDVVFPPGKMPNIYNALVVKGRDTVGQQINVTCEVQQLLGNNRVRAVAMSATDGLTRGMEVIDTGAALSVPVGGATLGRIFNVLGEPVDNLGPVDTRTTSPIHRSAPAFIQLDTKLSIFETGIKVVDLLAPYRRGGKIGLFGGAGVGKTVLIMELINNIAKAHGGVSVFGGVGERTREGNDLYMEMKESGVINEKNIAESKVALVYGQMNEPPGARMRVGLTALTMAEYFRDVNEQDVLLFIDNIFRFVQAGSEVSALLGRMPSAVGYQPTLSTEMGSLQERITSTKEGSITSIQAVYVPADDLTDPAPATTFAHLDATTVLSRGLAAKGIYPAVDPLDSTSTMLQPRIVGEEHYETAQRVKQTLQRYKELQDIIAILGLDELSEEDRLTVARARKIERFLSQPFFVAEVFTGSPGKYVGLAETIRGFQLILSGELDGLPEQAFYLVGNIDEATAKAMNLEGEKK.

172–179 (GGAGVGKT) contributes to the ATP binding site.

It belongs to the ATPase alpha/beta chains family. F-type ATPases have 2 components, CF(1) - the catalytic core - and CF(0) - the membrane proton channel. CF(1) has five subunits: alpha(3), beta(3), gamma(1), delta(1), epsilon(1). CF(0) has four main subunits: a(1), b(1), b'(1) and c(9-12).

The protein resides in the plastid. It is found in the chloroplast thylakoid membrane. It carries out the reaction ATP + H2O + 4 H(+)(in) = ADP + phosphate + 5 H(+)(out). Produces ATP from ADP in the presence of a proton gradient across the membrane. The catalytic sites are hosted primarily by the beta subunits. The polypeptide is ATP synthase subunit beta, chloroplastic (Scilla messeniaca (Greek squill)).